The primary structure comprises 215 residues: Probable phosphoglycerate mutase GpmB (215 aa).

Substrate-binding positions include 8-15 (RHGETQWN), 21-22 (QG), Arg-58, Arg-60, 82-85 (ELNM), 104-105 (RR), and 151-152 (GI). His-9 functions as the Tele-phosphohistidine intermediate in the catalytic mechanism. Glu-82 serves as the catalytic Proton donor/acceptor.

Belongs to the phosphoglycerate mutase family. GpmB subfamily.

It catalyses the reaction (2R)-2-phosphoglycerate = (2R)-3-phosphoglycerate. It functions in the pathway carbohydrate degradation; glycolysis; pyruvate from D-glyceraldehyde 3-phosphate: step 3/5. This is Probable phosphoglycerate mutase GpmB from Shigella dysenteriae serotype 1 (strain Sd197).